A 103-amino-acid polypeptide reads, in one-letter code: Large ribosomal subunit protein bL21 (103 aa).

The protein belongs to the bacterial ribosomal protein bL21 family. Part of the 50S ribosomal subunit. Contacts protein L20.

Functionally, this protein binds to 23S rRNA in the presence of protein L20. The chain is Large ribosomal subunit protein bL21 from Clostridium acetobutylicum (strain ATCC 824 / DSM 792 / JCM 1419 / IAM 19013 / LMG 5710 / NBRC 13948 / NRRL B-527 / VKM B-1787 / 2291 / W).